The following is a 407-amino-acid chain: Large ribosomal subunit protein uL4y (407 aa).

Residues P57 to A96 form a disordered region.

It belongs to the universal ribosomal protein uL4 family.

This is Large ribosomal subunit protein uL4y (RPL4D) from Arabidopsis thaliana (Mouse-ear cress).